The sequence spans 260 residues: Ras-related protein Rab-26 (260 aa).

The interval 1–56 (MSRKKTPKSKGGSEPATSTLPAAAAATNGPRLAHPRTVRPGPEAPPNGPPQSIRPS) is disordered. The GTP site is built by S76, G77, V78, G79, K80, T81, C82, S99, and T100. T81 provides a ligand contact to Mg(2+). 2 consecutive short sequence motifs (switch) follow at residues 90–105 (GAFL…GIDF) and 123–140 (DTAG…YYRD). The Mg(2+) site is built by T100 and D123. The GTP site is built by G126, N181, K182, D184, A212, and R213. S-geranylgeranyl cysteine attachment occurs at residues C257 and C258.

It belongs to the small GTPase superfamily. Rab family. In terms of assembly, interacts with ADRA2B. Interacts with RIMS1. Requires Mg(2+) as cofactor. In terms of tissue distribution, detected in zymogenic cells in the stomach.

Its subcellular location is the cytoplasmic vesicle. It is found in the secretory vesicle membrane. It localises to the golgi apparatus membrane. It catalyses the reaction GTP + H2O = GDP + phosphate + H(+). Its activity is regulated as follows. Regulated by guanine nucleotide exchange factors (GEFs) which promote the exchange of bound GDP for free GTP. Regulated by GTPase activating proteins (GAPs) which increase the GTP hydrolysis activity. Inhibited by GDP dissociation inhibitors (GDIs). In terms of biological role, the small GTPases Rab are key regulators of intracellular membrane trafficking, from the formation of transport vesicles to their fusion with membranes. Rabs cycle between an inactive GDP-bound form and an active GTP-bound form that is able to recruit to membranes different set of downstream effectors directly responsible for vesicle formation, movement, tethering and fusion. RAB26 mediates transport of ADRA2A and ADRA2B from the Golgi to the cell membrane. Plays a role in the maturation of zymogenic granules and in pepsinogen secretion in the stomach. Plays a role in the secretion of amylase from acinar granules in the parotid gland. The polypeptide is Ras-related protein Rab-26 (Mus musculus (Mouse)).